The chain runs to 98 residues: MEFKHVLMILGVIILTLAPLIMYSGLGEDEGYFGGADGAAGDLIMEISPNYEPWFEPFWEPPSGEIESLLFALQAAIGAIIIGYFFGYNKAKYDAKNQ.

The next 2 helical transmembrane spans lie at 6 to 26 (VLMI…YSGL) and 68 to 88 (SLLF…FFGY).

This sequence belongs to the CbiN family. Forms an energy-coupling factor (ECF) transporter complex composed of an ATP-binding protein (A component, CbiO), a transmembrane protein (T component, CbiQ) and 2 possible substrate-capture proteins (S components, CbiM and CbiN) of unknown stoichimetry.

It is found in the cell membrane. The protein operates within cofactor biosynthesis; adenosylcobalamin biosynthesis. Its function is as follows. Part of the energy-coupling factor (ECF) transporter complex CbiMNOQ involved in cobalt import. This Methanococcus maripaludis (strain DSM 14266 / JCM 13030 / NBRC 101832 / S2 / LL) protein is Cobalt transport protein CbiN.